The following is a 427-amino-acid chain: GPI mannosyltransferase 2 (427 aa).

Transmembrane regions (helical) follow at residues 7 to 27, 119 to 139, 164 to 184, 197 to 217, 247 to 267, 318 to 338, 350 to 370, and 404 to 424; these read LTTV…FAPG, ATLL…ALTL, FLLA…GMLL, ITLA…FSVA, AVLF…YMHY, VPNF…TVYF, LVYI…VQII, and LYVN…ACFL.

This sequence belongs to the PIGV family.

The protein resides in the endoplasmic reticulum membrane. Its pathway is glycolipid biosynthesis; glycosylphosphatidylinositol-anchor biosynthesis. In terms of biological role, mannosyltransferase involved in glycosylphosphatidylinositol-anchor biosynthesis. Transfers the second mannose to the glycosylphosphatidylinositol during GPI precursor assembly. The protein is GPI mannosyltransferase 2 (GPI18) of Eremothecium gossypii (strain ATCC 10895 / CBS 109.51 / FGSC 9923 / NRRL Y-1056) (Yeast).